Consider the following 353-residue polypeptide: Photosystem II protein D1 (353 aa).

Position 2 is an N-acetylthreonine (Thr2). Phosphothreonine is present on Thr2. 3 consecutive transmembrane segments (helical) span residues 29–46 (YIGW…TATS), 118–133 (HFFL…EWEL), and 142–156 (WIAV…AATA). Residue His118 participates in chlorophyll a binding. Position 126 (Tyr126) interacts with pheophytin a. The [CaMn4O5] cluster site is built by Asp170 and Glu189. A helical membrane pass occupies residues 197–218 (FHMLGVAGVFGGSLFSAMHGSL). A chlorophyll a-binding site is contributed by His198. A quinone is bound by residues His215 and 264–265 (SF). A Fe cation-binding site is contributed by His215. His272 is a binding site for Fe cation. The helical transmembrane segment at 274-288 (FLAAWPVVGIWFTAL) threads the bilayer. Positions 332, 333, 342, and 344 each coordinate [CaMn4O5] cluster. A propeptide spanning residues 345 to 353 (VVEAPAVNG) is cleaved from the precursor.

Belongs to the reaction center PufL/M/PsbA/D family. PSII is composed of 1 copy each of membrane proteins PsbA, PsbB, PsbC, PsbD, PsbE, PsbF, PsbH, PsbI, PsbJ, PsbK, PsbL, PsbM, PsbT, PsbX, PsbY, PsbZ, Psb30/Ycf12, at least 3 peripheral proteins of the oxygen-evolving complex and a large number of cofactors. It forms dimeric complexes. The D1/D2 heterodimer binds P680, chlorophylls that are the primary electron donor of PSII, and subsequent electron acceptors. It shares a non-heme iron and each subunit binds pheophytin, quinone, additional chlorophylls, carotenoids and lipids. D1 provides most of the ligands for the Mn4-Ca-O5 cluster of the oxygen-evolving complex (OEC). There is also a Cl(-1) ion associated with D1 and D2, which is required for oxygen evolution. The PSII complex binds additional chlorophylls, carotenoids and specific lipids. is required as a cofactor. Post-translationally, tyr-161 forms a radical intermediate that is referred to as redox-active TyrZ, YZ or Y-Z. In terms of processing, C-terminally processed by CTPA; processing is essential to allow assembly of the oxygen-evolving complex and thus photosynthetic growth.

The protein localises to the plastid. It is found in the chloroplast thylakoid membrane. The catalysed reaction is 2 a plastoquinone + 4 hnu + 2 H2O = 2 a plastoquinol + O2. Functionally, photosystem II (PSII) is a light-driven water:plastoquinone oxidoreductase that uses light energy to abstract electrons from H(2)O, generating O(2) and a proton gradient subsequently used for ATP formation. It consists of a core antenna complex that captures photons, and an electron transfer chain that converts photonic excitation into a charge separation. The D1/D2 (PsbA/PsbD) reaction center heterodimer binds P680, the primary electron donor of PSII as well as several subsequent electron acceptors. In Chlorella vulgaris (Green alga), this protein is Photosystem II protein D1.